Here is a 451-residue protein sequence, read N- to C-terminus: Probable glycine dehydrogenase (decarboxylating) subunit 1 (451 aa).

Belongs to the GcvP family. N-terminal subunit subfamily. The glycine cleavage system is composed of four proteins: P, T, L and H. In this organism, the P 'protein' is a heterodimer of two subunits.

It carries out the reaction N(6)-[(R)-lipoyl]-L-lysyl-[glycine-cleavage complex H protein] + glycine + H(+) = N(6)-[(R)-S(8)-aminomethyldihydrolipoyl]-L-lysyl-[glycine-cleavage complex H protein] + CO2. Functionally, the glycine cleavage system catalyzes the degradation of glycine. The P protein binds the alpha-amino group of glycine through its pyridoxal phosphate cofactor; CO(2) is released and the remaining methylamine moiety is then transferred to the lipoamide cofactor of the H protein. This is Probable glycine dehydrogenase (decarboxylating) subunit 1 from Thermococcus kodakarensis (strain ATCC BAA-918 / JCM 12380 / KOD1) (Pyrococcus kodakaraensis (strain KOD1)).